The sequence spans 328 residues: Cytochrome c biogenesis protein CcsA (328 aa).

8 helical membrane passes run 15–35, 36–56, 68–88, 97–117, 142–162, 236–256, 263–283, and 297–317; these read FLVL…PSIP, LLPG…AALL, ISNL…VHLI, LVGV…TLSL, VMML…AFLI, VIGL…VWAN, WSWD…AAYL, and AILA…VNLL.

It belongs to the CcmF/CycK/Ccl1/NrfE/CcsA family. As to quaternary structure, may interact with ccs1.

It localises to the cellular thylakoid membrane. Functionally, required during biogenesis of c-type cytochromes (cytochrome c6 and cytochrome f) at the step of heme attachment. This chain is Cytochrome c biogenesis protein CcsA, found in Microcystis aeruginosa (strain NIES-843 / IAM M-2473).